Reading from the N-terminus, the 269-residue chain is SF-assemblin (269 aa).

Residues M1–A23 form a disordered region. The segment at M1 to G24 is nonhelical region. Positions P25–T269 are rod. Residues A98–L144 are a coiled coil.

Belongs to the SF-assemblin family.

It localises to the cytoplasm. The protein localises to the cytoskeleton. Functionally, major component of the striated microtubule-associated fibers (SMAFs; system-I-fibers). This Chlamydomonas moewusii (Chlamydomonas eugametos) protein is SF-assemblin.